Here is a 388-residue protein sequence, read N- to C-terminus: Na(+)/H(+) antiporter NhaA (388 aa).

The next 11 helical transmembrane spans lie at 14-34 (GGIILIIAAVLAMLMANSGFT), 59-79 (MLLWINDALMAVFFLLIGLEV), 95-115 (AFPVIAAIGGMIVPALLYLAF), 125-145 (GWAIPAATDIAFALGVLALLG), 154-174 (IFLMALAIIDDLGAIVIIALF), 179-199 (LSMVSLGVAAFAIVLLAVLNL), 219-239 (VLKSGVHATLAGVIVGFFIPL), 254-274 (VLHPWVAYLILPLFAFANAGV), 287-307 (ILPLGIIAGLLIGKPLGISLF), 328-348 (IMAVGILCGIGFTMSIFIASL), and 356-376 (ALINWAKLGILIGSLLSAVIG).

It belongs to the NhaA Na(+)/H(+) (TC 2.A.33) antiporter family.

It localises to the cell inner membrane. It catalyses the reaction Na(+)(in) + 2 H(+)(out) = Na(+)(out) + 2 H(+)(in). In terms of biological role, na(+)/H(+) antiporter that extrudes sodium in exchange for external protons. The sequence is that of Na(+)/H(+) antiporter NhaA from Citrobacter koseri (strain ATCC BAA-895 / CDC 4225-83 / SGSC4696).